The following is a 964-amino-acid chain: Probable LRR receptor-like serine/threonine-protein kinase IRK (964 aa).

A signal peptide spans 1 to 20; it reads MYKALIFTVLLVSAVAPVRS. Topologically, residues 21–603 are extracellular; it reads LDPPLNDDVL…GHKRILLSIS (583 aa). LRR repeat units follow at residues 92 to 116, 117 to 141, 143 to 166, 168 to 190, 191 to 214, 215 to 238, 240 to 261, 263 to 286, 287 to 310, 312 to 334, and 335 to 358; these read LQFL…MLLS, LVNL…FFRQ, GSLR…ISSC, SLAA…IWSL, NTLR…IDRL, NNLR…IGSC, LLKT…TFQQ, SLCY…IGEM, RSLE…IGNL, ALKV…TANC, and INLL…LFQD. N104 is a glycosylation site (N-linked (GlcNAc...) asparagine). N-linked (GlcNAc...) asparagine glycosylation occurs at N173. Residue N317 is glycosylated (N-linked (GlcNAc...) asparagine). N370 carries an N-linked (GlcNAc...) asparagine glycan. 7 LRR repeats span residues 375 to 399, 400 to 423, 425 to 447, 448 to 471, 472 to 495, 496 to 519, and 521 to 544; these read IKKI…LGDL, RDLE…IGEL, HLSV…TGGA, VSLE…IKNC, SSLR…LAKL, TRLE…LANL, and YLHT…IFNG. An N-linked (GlcNAc...) asparagine glycan is attached at N470. 3 N-linked (GlcNAc...) asparagine glycosylation sites follow: N526, N562, and N578. The chain crosses the membrane as a helical span at residues 604–624; the sequence is SLIAISAAAAIVVGVIAITVL. Topologically, residues 625–964 are cytoplasmic; the sequence is NLRVRASTVS…SGSSDELGSS (340 aa). The 274-residue stretch at 678–951 folds into the Protein kinase domain; the sequence is LNKDCELGRG…GEAVNILRMI (274 aa). ATP contacts are provided by residues 684 to 692 and K706; that span reads LGRGGFGAV.

Belongs to the protein kinase superfamily. Ser/Thr protein kinase family. In terms of assembly, interacts with IRKI. In terms of processing, autophosphorylated. In terms of tissue distribution, highly expressed in root tips, shoot apices and developing flowers.

Its subcellular location is the cell membrane. The enzyme catalyses L-seryl-[protein] + ATP = O-phospho-L-seryl-[protein] + ADP + H(+). It catalyses the reaction L-threonyl-[protein] + ATP = O-phospho-L-threonyl-[protein] + ADP + H(+). This is Probable LRR receptor-like serine/threonine-protein kinase IRK from Arabidopsis thaliana (Mouse-ear cress).